The following is a 199-amino-acid chain: Elongation factor Ts (199 aa).

The segment at 81 to 84 (TDFV) is involved in Mg(2+) ion dislocation from EF-Tu.

This sequence belongs to the EF-Ts family.

The protein resides in the cytoplasm. Associates with the EF-Tu.GDP complex and induces the exchange of GDP to GTP. It remains bound to the aminoacyl-tRNA.EF-Tu.GTP complex up to the GTP hydrolysis stage on the ribosome. The protein is Elongation factor Ts of Thermotoga sp. (strain RQ2).